The chain runs to 371 residues: tRNA-specific 2-thiouridylase MnmA (371 aa).

Residues 13-20 and M39 contribute to the ATP site; that span reads GMSGGVDS. Positions 99–101 are interaction with target base in tRNA; sequence NPD. The active-site Nucleophile is C104. An intrachain disulfide couples C104 to C200. Residue G128 coordinates ATP. Residues 150-152 are interaction with tRNA; the sequence is KDQ. C200 serves as the catalytic Cysteine persulfide intermediate. The segment at 308–309 is interaction with tRNA; it reads RY.

The protein belongs to the MnmA/TRMU family.

The protein localises to the cytoplasm. It catalyses the reaction S-sulfanyl-L-cysteinyl-[protein] + uridine(34) in tRNA + AH2 + ATP = 2-thiouridine(34) in tRNA + L-cysteinyl-[protein] + A + AMP + diphosphate + H(+). Functionally, catalyzes the 2-thiolation of uridine at the wobble position (U34) of tRNA, leading to the formation of s(2)U34. In Listeria monocytogenes serovar 1/2a (strain ATCC BAA-679 / EGD-e), this protein is tRNA-specific 2-thiouridylase MnmA.